The sequence spans 952 residues: Ubiquitin carboxyl-terminal hydrolase CYLD (952 aa).

The segment at 106–589 is interaction with TRIP; sequence CEERLSLFRN…LEIMIGKKKG (484 aa). 2 CAP-Gly domains span residues 153-198 and 253-286; these read LAER…VFVA and DVLP…VQLC. Positions 311 to 350 are disordered; that stretch reads RRPPKLAFMSRGVGDKGSSSHNKPKVTGSTSDPGSRNRSE. Polar residues predominate over residues 327-346; that stretch reads GSSSHNKPKVTGSTSDPGSR. Phosphoserine is present on Ser383. The disordered stretch occupies residues 386–409; that stretch reads EMSSDFGHSSPPPQPPSMNSLSSE. Residues 390–465 form an interaction with TRAF2 region; the sequence is DFGHSSPPPQ…LPISSGNAHG (76 aa). A phosphoserine mark is found at Ser414 and Ser418. An interaction with IKBKG/NEMO region spans residues 466 to 680; the sequence is LEVGSLAEVK…FTSEEKDPEE (215 aa). The CAP-Gly 3 domain occupies 488-531; it reads GQPPGLSDVLAGLELEDECAGCTDGTFRGTRYFTCALKKALFVK. One can recognise a USP domain in the interval 588–946; sequence KGIQGHYNSC…DAYMCMYQSP (359 aa). Cys597 serves as the catalytic Nucleophile. Residues 777–829 are B-box; it reads LEDTPRQCRICGGLAMYECRECYDDPDISAGKIKQFCKTCSTQVHLHPRRLNH. Zn(2+) is bound by residues Cys784, Cys787, Cys795, Cys798, Cys813, Cys816, His821, and His829. His867 serves as the catalytic Proton acceptor.

This sequence belongs to the peptidase C19 family. As to quaternary structure, interacts (via CAP-Gly domain) with IKBKG/NEMO (via proline-rich C-terminal region). Interacts with TRAF2 and TRIP. Interacts with PLK1, DVL1, DVL3, MAVS, TBK1, IKKE and RIGI. Interacts (via CAP-Gly domain) with microtubules. Interacts with HDAC6 and BCL3. Interacts with MAP3K7. Identified in a complex with TRAF6 and SQSTM1. Interacts with OPTN and SQSTM1. Interacts with CEP350. Interacts with RNF31; the interaction is indirect and is mediated via SPATA2. Interacts with SPATA2 (via the PUB domain); the interaction is direct and recruits CYLD to the LUBAC complex, thereby regulating TNF-alpha-induced necroptosis. In terms of processing, phosphorylated on several serine residues by IKKA and/or IKKB in response to immune stimuli. Phosphorylation requires IKBKG. Phosphorylation abolishes TRAF2 deubiquitination, interferes with the activation of Jun kinases, and strongly reduces CD40-dependent gene activation by NF-kappa-B. Ubiquitinated. Polyubiquitinated in hepatocytes treated with palmitic acid. Ubiquitination is mediated by E3 ligase TRIM47 and leads to proteasomal degradation.

Its subcellular location is the cytoplasm. It is found in the perinuclear region. The protein localises to the cytoskeleton. It localises to the cell membrane. The protein resides in the microtubule organizing center. Its subcellular location is the centrosome. It is found in the spindle. The protein localises to the cilium basal body. It carries out the reaction Thiol-dependent hydrolysis of ester, thioester, amide, peptide and isopeptide bonds formed by the C-terminal Gly of ubiquitin (a 76-residue protein attached to proteins as an intracellular targeting signal).. Deubiquitinase that specifically cleaves 'Lys-63'- and linear 'Met-1'-linked polyubiquitin chains and is involved in NF-kappa-B activation and TNF-alpha-induced necroptosis. Negatively regulates NF-kappa-B activation by deubiquitinating upstream signaling factors. Contributes to the regulation of cell survival, proliferation and differentiation via its effects on NF-kappa-B activation. Negative regulator of Wnt signaling. Inhibits HDAC6 and thereby promotes acetylation of alpha-tubulin and stabilization of microtubules. Plays a role in the regulation of microtubule dynamics, and thereby contributes to the regulation of cell proliferation, cell polarization, cell migration, and angiogenesis. Required for normal cell cycle progress and normal cytokinesis. Inhibits nuclear translocation of NF-kappa-B. Plays a role in the regulation of inflammation and the innate immune response, via its effects on NF-kappa-B activation. Dispensable for the maturation of intrathymic natural killer cells, but required for the continued survival of immature natural killer cells. Negatively regulates TNFRSF11A signaling and osteoclastogenesis. Involved in the regulation of ciliogenesis, allowing ciliary basal bodies to migrate and dock to the plasma membrane; this process does not depend on NF-kappa-B activation. Ability to remove linear ('Met-1'-linked) polyubiquitin chains regulates innate immunity and TNF-alpha-induced necroptosis: recruited to the LUBAC complex via interaction with SPATA2 and restricts linear polyubiquitin formation on target proteins. Regulates innate immunity by restricting linear polyubiquitin formation on RIPK2 in response to NOD2 stimulation. Involved in TNF-alpha-induced necroptosis by removing linear ('Met-1'-linked) polyubiquitin chains from RIPK1, thereby regulating the kinase activity of RIPK1. Negatively regulates intestinal inflammation by removing 'Lys-63' linked polyubiquitin chain of NLRP6, thereby reducing the interaction between NLRP6 and PYCARD/ASC and formation of the NLRP6 inflammasome. Does not catalyze deubiquitination of heterotypic 'Lys-63'-/'Lys-48'-linked branched ubiquitin chains. Removes 'Lys-63' linked polyubiquitin chain of MAP3K7, which inhibits phosphorylation and blocks downstream activation of the JNK-p38 kinase cascades. Also removes 'Lys-63'-linked polyubiquitin chains of MAP3K1 and MA3P3K3, which inhibit their interaction with MAP2K1 and MAP2K2. In Mus musculus (Mouse), this protein is Ubiquitin carboxyl-terminal hydrolase CYLD (Cyld).